The chain runs to 151 residues: Putative pre-16S rRNA nuclease (151 aa).

This sequence belongs to the YqgF nuclease family.

It localises to the cytoplasm. Functionally, could be a nuclease involved in processing of the 5'-end of pre-16S rRNA. The protein is Putative pre-16S rRNA nuclease of Neisseria meningitidis serogroup B (strain ATCC BAA-335 / MC58).